Consider the following 336-residue polypeptide: Nucleoid-associated protein ECA2747 (336 aa).

The tract at residues 317 to 336 (KGTPPNLRDQLQRRTSGGKQ) is disordered.

It belongs to the YejK family.

The protein localises to the cytoplasm. It is found in the nucleoid. This is Nucleoid-associated protein ECA2747 from Pectobacterium atrosepticum (strain SCRI 1043 / ATCC BAA-672) (Erwinia carotovora subsp. atroseptica).